The primary structure comprises 287 residues: ATP synthase gamma chain (287 aa).

It belongs to the ATPase gamma chain family. In terms of assembly, F-type ATPases have 2 components, CF(1) - the catalytic core - and CF(0) - the membrane proton channel. CF(1) has five subunits: alpha(3), beta(3), gamma(1), delta(1), epsilon(1). CF(0) has three main subunits: a, b and c.

The protein resides in the cell inner membrane. Functionally, produces ATP from ADP in the presence of a proton gradient across the membrane. The gamma chain is believed to be important in regulating ATPase activity and the flow of protons through the CF(0) complex. This Salmonella paratyphi A (strain ATCC 9150 / SARB42) protein is ATP synthase gamma chain.